A 286-amino-acid chain; its full sequence is Phycobilisome 31.8 kDa linker polypeptide, phycoerythrin-associated, rod (286 aa).

Residues 2 to 179 (PFGPASRLGV…LVRGASSSSL (178 aa)) form the PBS-linker domain. Residues 231 to 286 (GKVYRIEVTGYRAKTFNNISKFRRSNQVFLVPYEKLSQEYQRIHQQGGVIASITPV) form the CpcD-like domain.

The protein belongs to the phycobilisome linker protein family. The phycobilisome is a hemidiscoidal structure that is composed of two distinct substructures: a core complex and six rods radiating from the core.

It is found in the cellular thylakoid membrane. Rod linker protein, associated with phycoerythrocyanin. Linker polypeptides determine the state of aggregation and the location of the disk-shaped phycobiliprotein units within the phycobilisome and modulate their spectroscopic properties in order to mediate a directed and optimal energy transfer. This is Phycobilisome 31.8 kDa linker polypeptide, phycoerythrin-associated, rod (cpeC) from Microchaete diplosiphon (Fremyella diplosiphon).